Consider the following 639-residue polypeptide: Serine protease HtrA-like (639 aa).

4 stretches are compositionally biased toward basic and acidic residues: residues 1-13, 21-75, 106-187, and 195-205; these read MDNDKKHVIPREQ, YFHN…EIHQ, QQLK…KESS, and KSQKIEQKEQK. The disordered stretch occupies residues 1–262; that stretch reads MDNDKKHVIP…LENEPKNNDT (262 aa). Over residues 206–219 the composition is skewed to polar residues; sequence ASSNETSNKELNSY. 2 stretches are compositionally biased toward basic and acidic residues: residues 220–235 and 245–262; these read TKDKNNKVEDNQDLKK and NKLEENEHLENEPKNNDT. Residues 277-297 traverse the membrane as a helical segment; that stretch reads IVIVVAIILIVILISAIISTM. Active-site charge relay system residues include His-374, Asp-404, and Ser-489. The PDZ domain maps to 527 to 629; sequence EIAEELEKKG…TLSAKIYREG (103 aa).

It belongs to the peptidase S1C family.

The protein localises to the cell membrane. The sequence is that of Serine protease HtrA-like from Staphylococcus haemolyticus (strain JCSC1435).